Consider the following 64-residue polypeptide: Prokaryotic ubiquitin-like protein Pup (64 aa).

Residues 1–11 show a composition bias toward basic and acidic residues; sequence MAQEQTKRTGG. A disordered region spans residues 1-37; sequence MAQEQTKRTGGGDEDDTPGADGAAGQERREKLAEDTD. An ARC ATPase binding region spans residues 21–58; that stretch reads DGAAGQERREKLAEDTDDLLDEIDDVLEENAEDFVRAY. Positions 24-52 form a coiled coil; that stretch reads AGQERREKLAEDTDDLLDEIDDVLEENAE. Q64 is modified (deamidated glutamine). Q64 is covalently cross-linked (Isoglutamyl lysine isopeptide (Gln-Lys) (interchain with K-? in acceptor proteins)).

The protein belongs to the prokaryotic ubiquitin-like protein family. As to quaternary structure, strongly interacts with the proteasome-associated ATPase ARC through a hydrophobic interface; the interacting region of Pup lies in its C-terminal half. There is one Pup binding site per ARC hexamer ring. Post-translationally, is modified by deamidation of its C-terminal glutamine to glutamate by the deamidase Dop, a prerequisite to the subsequent pupylation process.

It participates in protein degradation; proteasomal Pup-dependent pathway. In terms of biological role, protein modifier that is covalently attached to lysine residues of substrate proteins, thereby targeting them for proteasomal degradation. The tagging system is termed pupylation. The protein is Prokaryotic ubiquitin-like protein Pup of Rhodococcus jostii (strain RHA1).